Here is a 460-residue protein sequence, read N- to C-terminus: A-type ATP synthase subunit B (460 aa).

Belongs to the ATPase alpha/beta chains family. In terms of assembly, has multiple subunits with at least A(3), B(3), C, D, E, F, H, I and proteolipid K(x).

The protein resides in the cell membrane. Functionally, component of the A-type ATP synthase that produces ATP from ADP in the presence of a proton gradient across the membrane. The B chain is a regulatory subunit. The protein is A-type ATP synthase subunit B of Methanosarcina barkeri.